We begin with the raw amino-acid sequence, 461 residues long: Ribulose bisphosphate carboxylase (461 aa).

Residue asparagine 113 participates in substrate binding. Residue lysine 168 is the Proton acceptor of the active site. Substrate is bound at residue lysine 170. Residues lysine 193, aspartate 195, and glutamate 196 each coordinate Mg(2+). Position 193 is an N6-carboxylysine (lysine 193). Histidine 289 acts as the Proton acceptor in catalysis. Substrate contacts are provided by arginine 290, histidine 323, and serine 370.

Belongs to the RuBisCO large chain family. Type II subfamily. In terms of assembly, homodimer. Requires Mg(2+) as cofactor.

It catalyses the reaction 2 (2R)-3-phosphoglycerate + 2 H(+) = D-ribulose 1,5-bisphosphate + CO2 + H2O. The enzyme catalyses D-ribulose 1,5-bisphosphate + O2 = 2-phosphoglycolate + (2R)-3-phosphoglycerate + 2 H(+). RuBisCO catalyzes two reactions: the carboxylation of D-ribulose 1,5-bisphosphate, the primary event in carbon dioxide fixation, as well as the oxidative fragmentation of the pentose substrate. Both reactions occur simultaneously and in competition at the same active site. This chain is Ribulose bisphosphate carboxylase, found in Thiomonas intermedia (strain K12) (Thiobacillus intermedius).